Here is a 320-residue protein sequence, read N- to C-terminus: L-lactate dehydrogenase 2 (320 aa).

Positions 16, 37, 42, and 69 each coordinate NAD(+). Arg-94 contacts substrate. Residues Ser-107, 124–126 (VTN), and Thr-149 each bind NAD(+). Substrate is bound at residue 126-129 (NPVD). Residue 154–157 (DTAR) participates in substrate binding. Beta-D-fructose 1,6-bisphosphate is bound by residues Arg-159 and His-174. The active-site Proton acceptor is His-181. Residue Thr-235 participates in substrate binding.

Belongs to the LDH/MDH superfamily. LDH family. In terms of assembly, homotetramer.

It localises to the cytoplasm. The enzyme catalyses (S)-lactate + NAD(+) = pyruvate + NADH + H(+). It functions in the pathway fermentation; pyruvate fermentation to lactate; (S)-lactate from pyruvate: step 1/1. Its activity is regulated as follows. Allosterically activated by fructose 1,6-bisphosphate (FBP). Catalyzes the conversion of lactate to pyruvate. The polypeptide is L-lactate dehydrogenase 2 (Clostridium acetobutylicum (strain ATCC 824 / DSM 792 / JCM 1419 / IAM 19013 / LMG 5710 / NBRC 13948 / NRRL B-527 / VKM B-1787 / 2291 / W)).